The primary structure comprises 155 residues: Large ribosomal subunit protein uL16 (155 aa).

The segment at 1 to 22 (MLSPKRTKYRKQQRGRMKGKAT) is disordered.

Belongs to the universal ribosomal protein uL16 family. As to quaternary structure, part of the 50S ribosomal subunit.

Functionally, binds 23S rRNA and is also seen to make contacts with the A and possibly P site tRNAs. The chain is Large ribosomal subunit protein uL16 from Synechococcus sp. (strain JA-2-3B'a(2-13)) (Cyanobacteria bacterium Yellowstone B-Prime).